The following is a 126-amino-acid chain: Large ribosomal subunit protein eL32 (126 aa).

It belongs to the eukaryotic ribosomal protein eL32 family. In terms of assembly, part of the 50S ribosomal subunit.

In Thermococcus kodakarensis (strain ATCC BAA-918 / JCM 12380 / KOD1) (Pyrococcus kodakaraensis (strain KOD1)), this protein is Large ribosomal subunit protein eL32 (rpl32e).